Here is an 876-residue protein sequence, read N- to C-terminus: Alanine--tRNA ligase (876 aa).

Zn(2+)-binding residues include histidine 568, histidine 572, cysteine 670, and histidine 674.

Belongs to the class-II aminoacyl-tRNA synthetase family. Zn(2+) serves as cofactor.

It is found in the cytoplasm. It carries out the reaction tRNA(Ala) + L-alanine + ATP = L-alanyl-tRNA(Ala) + AMP + diphosphate. Functionally, catalyzes the attachment of alanine to tRNA(Ala) in a two-step reaction: alanine is first activated by ATP to form Ala-AMP and then transferred to the acceptor end of tRNA(Ala). Also edits incorrectly charged Ser-tRNA(Ala) and Gly-tRNA(Ala) via its editing domain. This chain is Alanine--tRNA ligase, found in Anaplasma phagocytophilum (strain HZ).